Reading from the N-terminus, the 425-residue chain is Glutamyl-tRNA reductase (425 aa).

Substrate contacts are provided by residues 49–52 (TCNR), Ser-109, 114–116 (EGQ), and Gln-120. Cys-50 functions as the Nucleophile in the catalytic mechanism. 189-194 (GAGETG) provides a ligand contact to NADP(+).

This sequence belongs to the glutamyl-tRNA reductase family. As to quaternary structure, homodimer.

It catalyses the reaction (S)-4-amino-5-oxopentanoate + tRNA(Glu) + NADP(+) = L-glutamyl-tRNA(Glu) + NADPH + H(+). Its pathway is porphyrin-containing compound metabolism; protoporphyrin-IX biosynthesis; 5-aminolevulinate from L-glutamyl-tRNA(Glu): step 1/2. It participates in porphyrin-containing compound metabolism; chlorophyll biosynthesis. Its function is as follows. Catalyzes the NADPH-dependent reduction of glutamyl-tRNA(Glu) to glutamate 1-semialdehyde (GSA). The polypeptide is Glutamyl-tRNA reductase (Chlorobium phaeobacteroides (strain DSM 266 / SMG 266 / 2430)).